The sequence spans 110 residues: Large ribosomal subunit protein P2 (110 aa).

The tract at residues 63–110 is disordered; the sequence is ASVPSGGGVAAAAPAAGGGGADPAEAKEEKKEEPEEESDDDMGFGLFD. Residues 86–95 show a composition bias toward basic and acidic residues; it reads AEAKEEKKEE.

This sequence belongs to the eukaryotic ribosomal protein P1/P2 family. P1 and P2 exist as dimers at the large ribosomal subunit. Phosphorylated.

In terms of biological role, plays an important role in the elongation step of protein synthesis. This chain is Large ribosomal subunit protein P2, found in Cryptochiton stelleri (Giant gumboot chiton).